A 163-amino-acid polypeptide reads, in one-letter code: Cytochrome c-type biogenesis protein CcmE (163 aa).

Residues 1–8 (MNPRRKKR) are Cytoplasmic-facing. A helical; Signal-anchor for type II membrane protein transmembrane segment spans residues 9 to 29 (LTIILAISAGLAAVIGLVLYA). Residues 30-163 (LSQNIDLFYT…TEAQLKGAKQ (134 aa)) lie on the Periplasmic side of the membrane. Heme-binding residues include His131 and Tyr135.

Belongs to the CcmE/CycJ family.

It localises to the cell inner membrane. In terms of biological role, heme chaperone required for the biogenesis of c-type cytochromes. Transiently binds heme delivered by CcmC and transfers the heme to apo-cytochromes in a process facilitated by CcmF and CcmH. The sequence is that of Cytochrome c-type biogenesis protein CcmE from Aeromonas salmonicida (strain A449).